Here is a 211-residue protein sequence, read N- to C-terminus: ATP-dependent Clp protease proteolytic subunit (211 aa).

S106 functions as the Nucleophile in the catalytic mechanism. H131 is a catalytic residue.

It belongs to the peptidase S14 family. As to quaternary structure, fourteen ClpP subunits assemble into 2 heptameric rings which stack back to back to give a disk-like structure with a central cavity, resembling the structure of eukaryotic proteasomes.

The protein resides in the cytoplasm. It carries out the reaction Hydrolysis of proteins to small peptides in the presence of ATP and magnesium. alpha-casein is the usual test substrate. In the absence of ATP, only oligopeptides shorter than five residues are hydrolyzed (such as succinyl-Leu-Tyr-|-NHMec, and Leu-Tyr-Leu-|-Tyr-Trp, in which cleavage of the -Tyr-|-Leu- and -Tyr-|-Trp bonds also occurs).. Its function is as follows. Cleaves peptides in various proteins in a process that requires ATP hydrolysis. Has a chymotrypsin-like activity. Plays a major role in the degradation of misfolded proteins. The polypeptide is ATP-dependent Clp protease proteolytic subunit (Nitrobacter hamburgensis (strain DSM 10229 / NCIMB 13809 / X14)).